Reading from the N-terminus, the 443-residue chain is Cell division protein FtsA (443 aa).

Belongs to the FtsA/MreB family. In terms of assembly, self-interacts. Interacts with FtsZ.

Its subcellular location is the cell inner membrane. In terms of biological role, cell division protein that is involved in the assembly of the Z ring. May serve as a membrane anchor for the Z ring. The protein is Cell division protein FtsA of Agrobacterium fabrum (strain C58 / ATCC 33970) (Agrobacterium tumefaciens (strain C58)).